Consider the following 176-residue polypeptide: Nuclear ribonuclease Z (176 aa).

It belongs to the RNase Z family. In terms of assembly, homodimer. Zn(2+) serves as cofactor.

Its subcellular location is the nucleus. The catalysed reaction is Endonucleolytic cleavage of RNA, removing extra 3' nucleotides from tRNA precursor, generating 3' termini of tRNAs. A 3'-hydroxy group is left at the tRNA terminus and a 5'-phosphoryl group is left at the trailer molecule.. Zinc phosphodiesterase, which displays some tRNA 3'-processing endonuclease activity. Probably involved in tRNA maturation, by removing a 3'-trailer from precursor tRNA. This is Nuclear ribonuclease Z (ELAC) from Triticum aestivum (Wheat).